A 517-amino-acid chain; its full sequence is Crotonobetaine/carnitine--CoA ligase (517 aa).

It belongs to the ATP-dependent AMP-binding enzyme family.

The enzyme catalyses 4-(trimethylamino)butanoate + ATP + CoA = 4-(trimethylamino)butanoyl-CoA + AMP + diphosphate. It catalyses the reaction crotonobetaine + ATP + CoA = crotonobetainyl-CoA + AMP + diphosphate. It carries out the reaction (R)-carnitine + ATP + CoA = (R)-carnitinyl-CoA + AMP + diphosphate. Its pathway is amine and polyamine metabolism; carnitine metabolism. Functionally, catalyzes the transfer of CoA to carnitine, generating the initial carnitinyl-CoA needed for the CaiB reaction cycle. Also has activity toward crotonobetaine and gamma-butyrobetaine. This chain is Crotonobetaine/carnitine--CoA ligase, found in Escherichia coli O127:H6 (strain E2348/69 / EPEC).